The sequence spans 154 residues: Myoglobin (154 aa).

A Globin domain is found at 2-148 (GLSDGEWQLV…FRNDMAAQYK (147 aa)). Position 4 is a phosphoserine (Ser-4). His-65 lines the nitrite pocket. Residue His-65 coordinates O2. Phosphothreonine is present on Thr-68. His-94 is a binding site for heme b.

Belongs to the globin family. As to quaternary structure, monomeric.

Its subcellular location is the cytoplasm. The protein localises to the sarcoplasm. It catalyses the reaction Fe(III)-heme b-[protein] + nitric oxide + H2O = Fe(II)-heme b-[protein] + nitrite + 2 H(+). The catalysed reaction is H2O2 + AH2 = A + 2 H2O. Functionally, monomeric heme protein which primary function is to store oxygen and facilitate its diffusion within muscle tissues. Reversibly binds oxygen through a pentacoordinated heme iron and enables its timely and efficient release as needed during periods of heightened demand. Depending on the oxidative conditions of tissues and cells, and in addition to its ability to bind oxygen, it also has a nitrite reductase activity whereby it regulates the production of bioactive nitric oxide. Under stress conditions, like hypoxia and anoxia, it also protects cells against reactive oxygen species thanks to its pseudoperoxidase activity. In Bos mutus grunniens (Wild yak), this protein is Myoglobin (MB).